We begin with the raw amino-acid sequence, 306 residues long: D-alanine--D-alanine ligase (306 aa).

Active-site residues include E18 and S150. Residues 104-303 (KMLWKAFGLP…FEQLVVKILE (200 aa)) form the ATP-grasp domain. Residue 134–189 (VAKLGLPLMVKPSLEGSSVGLTKVKAVEELKSAVEYALKFDNTILIEEWLAGDELT) participates in ATP binding. Residues D257, E270, and N272 each coordinate Mg(2+). S281 is an active-site residue.

It belongs to the D-alanine--D-alanine ligase family. Requires Mg(2+) as cofactor. The cofactor is Mn(2+).

The protein localises to the cytoplasm. It carries out the reaction 2 D-alanine + ATP = D-alanyl-D-alanine + ADP + phosphate + H(+). It participates in cell wall biogenesis; peptidoglycan biosynthesis. In terms of biological role, cell wall formation. The polypeptide is D-alanine--D-alanine ligase (Haemophilus influenzae (strain ATCC 51907 / DSM 11121 / KW20 / Rd)).